Here is a 225-residue protein sequence, read N- to C-terminus: NAD(P)H-quinone oxidoreductase subunit K, chloroplastic (225 aa).

Residues Cys43, Cys44, Cys108, and Cys139 each coordinate [4Fe-4S] cluster.

It belongs to the complex I 20 kDa subunit family. In terms of assembly, NDH is composed of at least 16 different subunits, 5 of which are encoded in the nucleus. Requires [4Fe-4S] cluster as cofactor.

Its subcellular location is the plastid. The protein localises to the chloroplast thylakoid membrane. It catalyses the reaction a plastoquinone + NADH + (n+1) H(+)(in) = a plastoquinol + NAD(+) + n H(+)(out). The enzyme catalyses a plastoquinone + NADPH + (n+1) H(+)(in) = a plastoquinol + NADP(+) + n H(+)(out). Its function is as follows. NDH shuttles electrons from NAD(P)H:plastoquinone, via FMN and iron-sulfur (Fe-S) centers, to quinones in the photosynthetic chain and possibly in a chloroplast respiratory chain. The immediate electron acceptor for the enzyme in this species is believed to be plastoquinone. Couples the redox reaction to proton translocation, and thus conserves the redox energy in a proton gradient. The chain is NAD(P)H-quinone oxidoreductase subunit K, chloroplastic from Platanus occidentalis (Sycamore).